A 177-amino-acid polypeptide reads, in one-letter code: Negative modulator of initiation of replication (177 aa).

Belongs to the SeqA family. In terms of assembly, homodimer. Polymerizes to form helical filaments.

It is found in the cytoplasm. Functionally, negative regulator of replication initiation, which contributes to regulation of DNA replication and ensures that replication initiation occurs exactly once per chromosome per cell cycle. Binds to pairs of hemimethylated GATC sequences in the oriC region, thus preventing assembly of replication proteins and re-initiation at newly replicated origins. Repression is relieved when the region becomes fully methylated. The protein is Negative modulator of initiation of replication of Vibrio cholerae serotype O1 (strain ATCC 39315 / El Tor Inaba N16961).